Here is a 372-residue protein sequence, read N- to C-terminus: Alanine dehydrogenase 2 (372 aa).

His95 is an active-site residue. 169–199 (KVTIIGGGQAGTNAAKIALGLGADVTILDVN) provides a ligand contact to NAD(+).

It belongs to the AlaDH/PNT family.

It carries out the reaction L-alanine + NAD(+) + H2O = pyruvate + NH4(+) + NADH + H(+). Its pathway is amino-acid degradation; L-alanine degradation via dehydrogenase pathway; NH(3) and pyruvate from L-alanine: step 1/1. In terms of biological role, may play a role in cell wall synthesis as L-alanine is an important constituent of the peptidoglycan layer. This chain is Alanine dehydrogenase 2 (ald2), found in Staphylococcus aureus (strain N315).